The following is a 43-amino-acid chain: uncharacterized protein (43 aa).

The span at 1-37 (MIIKNNNNNNNNNNNNNNNNNNNNNNNNNNNNNNNNN) shows a compositional bias: low complexity. The tract at residues 1–43 (MIIKNNNNNNNNNNNNNNNNNNNNNNNNNNNNNNNNNIEIIIK) is disordered.

This is an uncharacterized protein from Dictyostelium discoideum (Social amoeba).